Consider the following 385-residue polypeptide: Protein-glutamate methylesterase/protein-glutamine glutaminase (385 aa).

Position 53 is a 4-aspartylphosphate (aspartate 53). In terms of domain architecture, CheB-type methylesterase spans 196 to 385 (KHKTGKIIVV…EIADHVLRRS (190 aa)). Active-site residues include serine 208, histidine 234, and aspartate 330.

It belongs to the CheB family. Phosphorylated by CheA. Phosphorylation of the N-terminal regulatory domain activates the methylesterase activity.

The protein localises to the cytoplasm. The enzyme catalyses [protein]-L-glutamate 5-O-methyl ester + H2O = L-glutamyl-[protein] + methanol + H(+). It catalyses the reaction L-glutaminyl-[protein] + H2O = L-glutamyl-[protein] + NH4(+). In terms of biological role, involved in chemotaxis. Part of a chemotaxis signal transduction system that modulates chemotaxis in response to various stimuli. Catalyzes the demethylation of specific methylglutamate residues introduced into the chemoreceptors (methyl-accepting chemotaxis proteins or MCP) by CheR. Also mediates the irreversible deamidation of specific glutamine residues to glutamic acid. In Borreliella burgdorferi (strain ATCC 35210 / DSM 4680 / CIP 102532 / B31) (Borrelia burgdorferi), this protein is Protein-glutamate methylesterase/protein-glutamine glutaminase.